Here is a 575-residue protein sequence, read N- to C-terminus: Transcription factor ncaA (575 aa).

Composition is skewed to polar residues over residues 1–15 (MAETTPSRPNDTPEN) and 22–34 (DNQSQSAGQSKNP). 2 disordered regions span residues 1–40 (MAETTPSRPNDTPENSPGGGDDNQSQSAGQSKNPASVKDR) and 79–114 (IRSGITRRQARTSSGKRDTPERAMGKGPSEHFAGGE). Residues 39–66 (DRKCQYCHQAFTSSSLGRHLDQYLFKKK) form a UBZ4-type; degenerate zinc finger. The span at 93 to 102 (GKRDTPERAM) shows a compositional bias: basic and acidic residues. Positions 337-371 (FAREVEKRKTLDEQLARVQQEANQLRAQVEKLGSC) form a coiled coil. Positions 429 to 575 (GRVGVGYGNP…ASGPPPSSGA (147 aa)) are disordered. The span at 440–454 (LDDRSSADTKARATE) shows a compositional bias: basic and acidic residues. Positions 455–471 (EPPASAALASTSTSAPP) are enriched in low complexity. A compositionally biased stretch (pro residues) spans 472 to 485 (SAHPPPRALQPAPG). Polar residues-rich tracts occupy residues 493-513 (DQSSSHTGGASAPSSQNTSPY) and 538-558 (SAANPSATAPNTWNPHSHQSL).

In terms of assembly, interacts with atrR.

It localises to the nucleus. Functionally, transcription factor required for normal voriconazole resistance. Contributes to the function of atrR and regulates the expression of the atrR target gene abcG1. In Aspergillus fumigatus (strain ATCC MYA-4609 / CBS 101355 / FGSC A1100 / Af293) (Neosartorya fumigata), this protein is Transcription factor ncaA.